A 507-amino-acid polypeptide reads, in one-letter code: tRNA (guanine(10)-N(2))-methyltransferase TRMT11 (507 aa).

The segment covering 459–475 (EKTKKKEQKKKSVENHL) has biased composition (basic and acidic residues). The segment at 459 to 507 (EKTKKKEQKKKSVENHLKSKNNNDVINNNSNDTNSNNNCNNENNIENQK) is disordered. The segment covering 480–507 (NNDVINNNSNDTNSNNNCNNENNIENQK) has biased composition (low complexity).

This sequence belongs to the class I-like SAM-binding methyltransferase superfamily. TRM11 methyltransferase family. Part of the heterodimeric TRMT11-TRM112 methyltransferase complex; this complex forms an active tRNA methyltransferase, where TRMT112 acts as an activator of the catalytic subunit TRMT11.

It localises to the cytoplasm. The enzyme catalyses guanosine(10) in tRNA + S-adenosyl-L-methionine = N(2)-methylguanosine(10) in tRNA + S-adenosyl-L-homocysteine + H(+). In terms of biological role, catalytic subunit of the TRMT11-TRM112 methyltransferase complex, that specifically mediates the S-adenosyl-L-methionine-dependent N(2)-methylation of guanosine nucleotide at position 10 (m2G10) in tRNAs. This is one of the major tRNA (guanine-N(2))-methyltransferases. The sequence is that of tRNA (guanine(10)-N(2))-methyltransferase TRMT11 (trmt11) from Dictyostelium discoideum (Social amoeba).